The chain runs to 180 residues: Large ribosomal subunit protein uL5c (180 aa).

This sequence belongs to the universal ribosomal protein uL5 family. In terms of assembly, part of the 50S ribosomal subunit; contacts the 5S rRNA.

It is found in the plastid. Its subcellular location is the chloroplast. Binds 5S rRNA, forms part of the central protuberance of the 50S subunit. This chain is Large ribosomal subunit protein uL5c (rpl5), found in Tetradesmus obliquus (Green alga).